The following is a 64-amino-acid chain: Small hydrophobic protein (64 aa).

The Intravirion portion of the chain corresponds to 1–20; sequence MENTSITIEFSSKFWPYFTL. The interaction with host BCAP31 stretch occupies residues 6–15; it reads ITIEFSSKFW. A helical; Signal-anchor for type II membrane protein transmembrane segment spans residues 21–44; sequence IHMITTIISLLIIISIMIAILNKL. An interaction with small-molecule inhibitor region spans residues 38 to 43; the sequence is IAILNK. The Virion surface segment spans residues 45 to 64; sequence CEYNVFHNKTFELPRARVNT. The N-linked (GlcNAc...) asparagine; by host glycan is linked to Asn52.

This sequence belongs to the orthopneumovirus small hydrophobic protein family. Homopentamer forming a funnel-like pore. Interacts with glycoprotein G; this interaction occurs on the surface of virion particles and infected cells. Interacts with host BCAP31 (via C-terminus); this interaction is direct. In terms of processing, four species of SH have been detected in infected cell cytoplasm: a 7.5 kDa non-glycosylated form (SH0), a 13-15 kDa form that contains one or two N-linked carbohydrate side chains of the high-mannose type (SHg), a 21-30 kDa polylactosaminoglycan-modified form of the protein (SHp), and the isoform generated by alternative translational initiation. Of these different forms, SH0 is by far the most abundant protein detected during virus infection. Tyrosine phosphorylated.

The protein localises to the virion membrane. It localises to the host cell membrane. It is found in the host Golgi apparatus membrane. The protein resides in the host endoplasmic reticulum membrane. Its activity is regulated as follows. Channel activity is inhibited by copper. Also inhibited by small-molecule pyronin B. Viroporin that forms a homopentameric ion channel displaying low ion selectivity. May play a role in virus morphogenesis and pathogenicity at various stages of the viral life cycle. Accumulates at the membrane of the Golgi apparatus in infected cells and may facilitate virus release by modifying the secretory pathway. May enhance host membrane permeability and disrupt cellular ion homeostasis, which can be sensed as damage-associated molecular patterns/danger signals, triggering NLRP3 inflammasome activation and inflammatory immune response. Also inhibits host TNFA-mediated signaling pathway and may delay apoptosis, allowing time for the virus to replicate. The sequence is that of Small hydrophobic protein from Homo sapiens (Human).